The following is a 549-amino-acid chain: Glucose-6-phosphate isomerase (549 aa).

Glu-353 serves as the catalytic Proton donor. Residues His-384 and Lys-510 contribute to the active site. A disordered region spans residues 523–549 (AEPPAAQSDSSTDALVRRYRSERGRTA). The segment covering 537–549 (LVRRYRSERGRTA) has biased composition (basic and acidic residues).

The protein belongs to the GPI family.

The protein resides in the cytoplasm. It carries out the reaction alpha-D-glucose 6-phosphate = beta-D-fructose 6-phosphate. It participates in carbohydrate biosynthesis; gluconeogenesis. Its pathway is carbohydrate degradation; glycolysis; D-glyceraldehyde 3-phosphate and glycerone phosphate from D-glucose: step 2/4. Functionally, catalyzes the reversible isomerization of glucose-6-phosphate to fructose-6-phosphate. The protein is Glucose-6-phosphate isomerase of Mycolicibacterium gilvum (strain PYR-GCK) (Mycobacterium gilvum (strain PYR-GCK)).